The primary structure comprises 222 residues: Prolactin-3B1 (222 aa).

The signal sequence occupies residues 1–31; the sequence is MKLSLSQPCSFSGALLLLAVSNLLVWEKVTS. Cystine bridges form between C82–C197 and C214–C222.

This sequence belongs to the somatotropin/prolactin family.

It is found in the secreted. The polypeptide is Prolactin-3B1 (Prl3b1) (Mus musculus (Mouse)).